The sequence spans 447 residues: Adenylosuccinate synthetase (447 aa).

Residues 12 to 18 (GDEGKGK) and 40 to 42 (GHT) each bind GTP. Asp-13 acts as the Proton acceptor in catalysis. Asp-13 and Gly-40 together coordinate Mg(2+). IMP-binding positions include 13–16 (DEGK), 38–41 (NAGH), Thr-128, Arg-142, Gln-223, Thr-238, and Arg-302. Residue His-41 is the Proton donor of the active site. 298-304 (TTTGRKR) contributes to the substrate binding site. Residues Arg-304, 330–332 (KLD), and 412–414 (SLG) contribute to the GTP site.

It belongs to the adenylosuccinate synthetase family. In terms of assembly, homodimer. Mg(2+) serves as cofactor.

It is found in the cytoplasm. It carries out the reaction IMP + L-aspartate + GTP = N(6)-(1,2-dicarboxyethyl)-AMP + GDP + phosphate + 2 H(+). It participates in purine metabolism; AMP biosynthesis via de novo pathway; AMP from IMP: step 1/2. Its function is as follows. Plays an important role in the de novo pathway of purine nucleotide biosynthesis. Catalyzes the first committed step in the biosynthesis of AMP from IMP. This chain is Adenylosuccinate synthetase, found in Nostoc punctiforme (strain ATCC 29133 / PCC 73102).